We begin with the raw amino-acid sequence, 275 residues long: uncharacterized protein (275 aa).

Residues 148 to 158 show a composition bias toward polar residues; the sequence is TFPTTAPSITP. The tract at residues 148–173 is disordered; the sequence is TFPTTAPSITPGNKEGEKTTSTDTDE. Residues 187–207 traverse the membrane as a helical segment; the sequence is ILIAVTLLLSGVAIIVFVIFE. Residues 234-264 form a disordered region; that stretch reads GQPPGTAESKPDSQPQKVGQDAANSSNPKKA. A compositionally biased stretch (polar residues) spans 245 to 261; it reads DSQPQKVGQDAANSSNP.

The protein localises to the membrane. This is an uncharacterized protein from Homo sapiens (Human).